A 478-amino-acid polypeptide reads, in one-letter code: Leukotoxin secretion protein D (478 aa).

Topologically, residues Met1 to Val77 are cytoplasmic. The helical transmembrane segment at Ser78 to Glu98 threads the bilayer. Topologically, residues Ile99–Arg478 are periplasmic.

The protein belongs to the membrane fusion protein (MFP) (TC 8.A.1) family.

It is found in the cell inner membrane. Its function is as follows. Involved in the transport of the Leukotoxin. In Pasteurella haemolytica-like sp. (strain 5943B), this protein is Leukotoxin secretion protein D (lktD).